Here is a 155-residue protein sequence, read N- to C-terminus: Transport protein particle subunit bet5 (155 aa).

It belongs to the TRAPP small subunits family. BET5 subfamily. Part of the multisubunit TRAPP (transport protein particle) complex composed of bet3, bet5, trs20, trs23, trs31, trs33, trs65, trs85, trs120 and trs130.

It is found in the golgi apparatus. It localises to the cis-Golgi network. The protein resides in the endoplasmic reticulum. Functionally, may play a role in vesicular transport from endoplasmic reticulum to Golgi. The sequence is that of Transport protein particle subunit bet5 (bet5) from Schizosaccharomyces pombe (strain 972 / ATCC 24843) (Fission yeast).